Here is a 332-residue protein sequence, read N- to C-terminus: Arabinogalactan endo-beta-1,4-galactanase (332 aa).

A glycan (N-linked (GlcNAc...) asparagine) is linked at Asn111. The active-site Proton donor is Glu135. Glu245 functions as the Nucleophile in the catalytic mechanism.

Belongs to the glycosyl hydrolase 53 family.

The catalysed reaction is The enzyme specifically hydrolyzes (1-&gt;4)-beta-D-galactosidic linkages in type I arabinogalactans.. In Thermothelomyces thermophilus (Myceliophthora thermophila), this protein is Arabinogalactan endo-beta-1,4-galactanase.